The following is a 150-amino-acid chain: Large ribosomal subunit protein bL9 (150 aa).

The protein belongs to the bacterial ribosomal protein bL9 family.

Its function is as follows. Binds to the 23S rRNA. The sequence is that of Large ribosomal subunit protein bL9 from Serratia proteamaculans (strain 568).